The sequence spans 422 residues: UDP-N-acetylglucosamine 1-carboxyvinyltransferase (422 aa).

Position 22–23 (22–23 (KN)) interacts with phosphoenolpyruvate. Residue Arg-93 coordinates UDP-N-acetyl-alpha-D-glucosamine. The active-site Proton donor is Cys-117. Cys-117 carries the 2-(S-cysteinyl)pyruvic acid O-phosphothioketal modification. UDP-N-acetyl-alpha-D-glucosamine is bound by residues 122-126 (RPVDL), 162-165 (KVSV), Asp-307, and Ile-329.

This sequence belongs to the EPSP synthase family. MurA subfamily.

The protein resides in the cytoplasm. The enzyme catalyses phosphoenolpyruvate + UDP-N-acetyl-alpha-D-glucosamine = UDP-N-acetyl-3-O-(1-carboxyvinyl)-alpha-D-glucosamine + phosphate. It participates in cell wall biogenesis; peptidoglycan biosynthesis. Its function is as follows. Cell wall formation. Adds enolpyruvyl to UDP-N-acetylglucosamine. This chain is UDP-N-acetylglucosamine 1-carboxyvinyltransferase, found in Hamiltonella defensa subsp. Acyrthosiphon pisum (strain 5AT).